The sequence spans 285 residues: 4-diphosphocytidyl-2-C-methyl-D-erythritol kinase (285 aa).

The active site involves lysine 28. 109–119 (PVAAGLGGGSA) provides a ligand contact to ATP. Aspartate 148 is a catalytic residue.

This sequence belongs to the GHMP kinase family. IspE subfamily.

The catalysed reaction is 4-CDP-2-C-methyl-D-erythritol + ATP = 4-CDP-2-C-methyl-D-erythritol 2-phosphate + ADP + H(+). It functions in the pathway isoprenoid biosynthesis; isopentenyl diphosphate biosynthesis via DXP pathway; isopentenyl diphosphate from 1-deoxy-D-xylulose 5-phosphate: step 3/6. Its function is as follows. Catalyzes the phosphorylation of the position 2 hydroxy group of 4-diphosphocytidyl-2C-methyl-D-erythritol. This Novosphingobium aromaticivorans (strain ATCC 700278 / DSM 12444 / CCUG 56034 / CIP 105152 / NBRC 16084 / F199) protein is 4-diphosphocytidyl-2-C-methyl-D-erythritol kinase.